A 404-amino-acid chain; its full sequence is tRNA/tmRNA (uracil-C(5))-methyltransferase (404 aa).

Residues Gln218, Tyr251, Asn256, Glu272, and Asp332 each contribute to the S-adenosyl-L-methionine site. Cys358 acts as the Nucleophile in catalysis. Catalysis depends on Glu392, which acts as the Proton acceptor.

This sequence belongs to the class I-like SAM-binding methyltransferase superfamily. RNA M5U methyltransferase family. TrmA subfamily.

It carries out the reaction uridine(54) in tRNA + S-adenosyl-L-methionine = 5-methyluridine(54) in tRNA + S-adenosyl-L-homocysteine + H(+). It catalyses the reaction uridine(341) in tmRNA + S-adenosyl-L-methionine = 5-methyluridine(341) in tmRNA + S-adenosyl-L-homocysteine + H(+). Functionally, dual-specificity methyltransferase that catalyzes the formation of 5-methyluridine at position 54 (m5U54) in all tRNAs, and that of position 341 (m5U341) in tmRNA (transfer-mRNA). This is tRNA/tmRNA (uracil-C(5))-methyltransferase from Helicobacter hepaticus (strain ATCC 51449 / 3B1).